The chain runs to 135 residues: MRFIVSLLAFTAAATATALPASAAKNAKLATSAAFAKQAEGTTCNVGSIACCNSPAETNNDSLLSGLLGAGLLNGLSGNTGSACAKASLIDQLGLLALVDHTEEGPVCKNIVACCPEGTTNCVAVDNAGAGTKAE.

The N-terminal stretch at 1-18 (MRFIVSLLAFTAAATATA) is a signal peptide. 4 disulfides stabilise this stretch: C44–C114, C51–C108, C52–C84, and C115–C122. An N-linked (GlcNAc...) asparagine glycan is attached at N60.

This sequence belongs to the fungal hydrophobin family. Forms homodimers at high concentrations, and these dimers are off-pathway to rodlet formation. Dissociation of the dimers into monomers, with resultant exposure of the hydrophobic face, is necessary for self-assembly to form functional amyloid fibrils called rodlets. Self-assembly into fibrillar rodlets occurs spontaneously at hydrophobic:hydrophilic interfaces and the rodlets further associate laterally to form amphipathic monolayers.

Its subcellular location is the secreted. It localises to the spore wall. Functionally, aerial growth, conidiation, and dispersal of filamentous fungi in the environment rely upon a capability of their secreting small amphipathic proteins called hydrophobins (HPBs) with low sequence identity. Class I can self-assemble into an outermost layer of rodlet bundles on aerial cell surfaces, conferring cellular hydrophobicity that supports fungal growth, development and dispersal; whereas Class II form highly ordered films at water-air interfaces through intermolecular interactions but contribute nothing to the rodlet structure. DewA is a class I hydrophobin that contributes to spore wall hydrophobicity. The chain is Class I hydrophobin dewA from Emericella nidulans (strain FGSC A4 / ATCC 38163 / CBS 112.46 / NRRL 194 / M139) (Aspergillus nidulans).